A 190-amino-acid chain; its full sequence is dCTP deaminase (190 aa).

DCTP-binding positions include 111-116 (KSTYAR), 135-137 (TLE), Gln156, Tyr172, and Gln182. Glu137 serves as the catalytic Proton donor/acceptor.

Belongs to the dCTP deaminase family. As to quaternary structure, homotrimer.

It carries out the reaction dCTP + H2O + H(+) = dUTP + NH4(+). The protein operates within pyrimidine metabolism; dUMP biosynthesis; dUMP from dCTP (dUTP route): step 1/2. In terms of biological role, catalyzes the deamination of dCTP to dUTP. The sequence is that of dCTP deaminase from Stenotrophomonas maltophilia (strain K279a).